An 895-amino-acid chain; its full sequence is Glutamate receptor 2.3 (895 aa).

An N-terminal signal peptide occupies residues 1–23 (MRTEKLFFCILLVFFFCLEFNRG). Topologically, residues 24–582 (QNNGKTLVDV…ILFMKPLSWK (559 aa)) are extracellular. Asn-52, Asn-203, Asn-266, Asn-330, Asn-342, Asn-477, and Asn-542 each carry an N-linked (GlcNAc...) asparagine glycan. Residues 583-603 (LWLTSFISFFLVGCTVWVLEY) traverse the membrane as a helical segment. Over 604–610 (KRNPDFS) the chain is Cytoplasmic. A helical membrane pass occupies residues 611 to 631 (GPPRFQASTICWFAFSTMVFA). Residues 632–635 (PRER) lie on the Cytoplasmic side of the membrane. The helical transmembrane segment at 636-656 (VFSFWARALVIAWYFLVLVLT) threads the bilayer. Topologically, residues 657–830 (QSYTASLASL…FTSRQLDIDS (174 aa)) are extracellular. Residues 831–851 (FLFLFVGVLLVCVMALGNFTY) traverse the membrane as a helical segment. At 852-895 (CFLAKDQVSYLDKVEMSPCSSSQQMPVKRKTQLNMSQVHDQDSL) the chain is on the cytoplasmic side. The segment at 873 to 895 (SQQMPVKRKTQLNMSQVHDQDSL) is disordered.

The protein belongs to the glutamate-gated ion channel (TC 1.A.10.1) family. May form heteromers. In terms of tissue distribution, expressed predominantly in roots.

The protein resides in the membrane. Glutamate-gated receptor that probably acts as a non-selective cation channel. May be involved in light-signal transduction and calcium homeostasis via the regulation of calcium influx into cells. In Arabidopsis thaliana (Mouse-ear cress), this protein is Glutamate receptor 2.3 (GLR2.3).